The primary structure comprises 375 residues: DNA replication and repair protein RecF (375 aa).

30-37 (GNNAQGKS) is an ATP binding site.

Belongs to the RecF family.

It localises to the cytoplasm. In terms of biological role, the RecF protein is involved in DNA metabolism; it is required for DNA replication and normal SOS inducibility. RecF binds preferentially to single-stranded, linear DNA. It also seems to bind ATP. In Microcystis aeruginosa (strain NIES-843 / IAM M-2473), this protein is DNA replication and repair protein RecF.